The following is a 92-amino-acid chain: MWPVLWTVVRTYAPYVTFPVAFVVGAVGYHLEWFIRGKDPQPVEEEKSILERREDRKLDEMLGKDHTQVVSLKDKLEFAPKAVLNRNRPEKN.

Residues 15 to 34 (YVTFPVAFVVGAVGYHLEWF) traverse the membrane as a helical segment.

This sequence belongs to the SMIM12 family.

The protein localises to the membrane. The sequence is that of Small integral membrane protein 12 (Smim12) from Rattus norvegicus (Rat).